The following is a 632-amino-acid chain: Probable potassium transport system protein Kup (632 aa).

12 helical membrane-spanning segments follow: residues 20-40 (LLVAAVGVVYGDIGTSPLYTL), 60-80 (ILSLILWSLLWVVSFKYVMFI), 111-131 (LMVICGLIGASLFYGDSMITP), 146-166 (FDGIDHWVVPISLVVLVALFL), 178-198 (LFGPIMVTWFVVLAALGVHGI), 216-236 (FFIVHPGMGVAILGAVVLALT), 257-277 (WFALVLPALVLNYFGQGAILL), 289-309 (LLAPGWALLPLVGLATMATVI), 347-367 (IYIAAVNWTLMVGVVLLVIGF), 379-399 (VAVTGTMLMTTILVSAVMLLL), 404-424 (PVLAVPILIGFLLVDGLFFAA), and 429-449 (IVQGGAFPVLAGGVLFLLMST).

It belongs to the HAK/KUP transporter (TC 2.A.72) family.

The protein localises to the cell inner membrane. The catalysed reaction is K(+)(in) + H(+)(in) = K(+)(out) + H(+)(out). In terms of biological role, transport of potassium into the cell. Likely operates as a K(+):H(+) symporter. In Pseudomonas putida (strain W619), this protein is Probable potassium transport system protein Kup.